A 95-amino-acid chain; its full sequence is DNA-directed RNA polymerase subunit Rpo11 (95 aa).

Belongs to the archaeal Rpo11/eukaryotic RPB11/RPC19 RNA polymerase subunit family. Part of the RNA polymerase complex.

It localises to the cytoplasm. It carries out the reaction RNA(n) + a ribonucleoside 5'-triphosphate = RNA(n+1) + diphosphate. Functionally, DNA-dependent RNA polymerase (RNAP) catalyzes the transcription of DNA into RNA using the four ribonucleoside triphosphates as substrates. The protein is DNA-directed RNA polymerase subunit Rpo11 of Pyrococcus furiosus (strain ATCC 43587 / DSM 3638 / JCM 8422 / Vc1).